We begin with the raw amino-acid sequence, 58 residues long: GCLDIGKTCKDDCECCGCGNVCYCPFDWFGGSWQPFGCSCAYGLKYVCAHKQKKCPNV.

Disulfide bonds link Cys-2–Cys-16, Cys-9–Cys-22, Cys-15–Cys-40, Cys-24–Cys-38, and Cys-48–Cys-55.

As to expression, expressed by the venom gland.

The protein resides in the secreted. Functionally, no toxic effects on mice at dose levels of 5 ug per mouse. May be toxic to insects. This is U8-ctenitoxin-Pr1a from Phoneutria reidyi (Brazilian Amazonian armed spider).